Consider the following 209-residue polypeptide: Large ribosomal subunit protein eL13 (209 aa).

This sequence belongs to the eukaryotic ribosomal protein eL13 family. Component of the 60S large ribosomal subunit (LSU).

Its subcellular location is the cytoplasm. Its function is as follows. Component of the ribosome, a large ribonucleoprotein complex responsible for the synthesis of proteins in the cell. The small ribosomal subunit (SSU) binds messenger RNAs (mRNAs) and translates the encoded message by selecting cognate aminoacyl-transfer RNA (tRNA) molecules. The large subunit (LSU) contains the ribosomal catalytic site termed the peptidyl transferase center (PTC), which catalyzes the formation of peptide bonds, thereby polymerizing the amino acids delivered by tRNAs into a polypeptide chain. The nascent polypeptides leave the ribosome through a tunnel in the LSU and interact with protein factors that function in enzymatic processing, targeting, and the membrane insertion of nascent chains at the exit of the ribosomal tunnel. As part of the LSU, it is probably required for its formation and the maturation of rRNAs. The chain is Large ribosomal subunit protein eL13 (rpl13) from Dictyostelium discoideum (Social amoeba).